A 72-amino-acid chain; its full sequence is Translation initiation factor IF-1 (72 aa).

The 72-residue stretch at 1–72 (MSDKSIKMQA…SNGRITYRHK (72 aa)) folds into the S1-like domain.

This sequence belongs to the IF-1 family. As to quaternary structure, component of the 30S ribosomal translation pre-initiation complex which assembles on the 30S ribosome in the order IF-2 and IF-3, IF-1 and N-formylmethionyl-tRNA(fMet); mRNA recruitment can occur at any time during PIC assembly.

It is found in the cytoplasm. One of the essential components for the initiation of protein synthesis. Stabilizes the binding of IF-2 and IF-3 on the 30S subunit to which N-formylmethionyl-tRNA(fMet) subsequently binds. Helps modulate mRNA selection, yielding the 30S pre-initiation complex (PIC). Upon addition of the 50S ribosomal subunit IF-1, IF-2 and IF-3 are released leaving the mature 70S translation initiation complex. This chain is Translation initiation factor IF-1, found in Mycoplasmopsis pulmonis (strain UAB CTIP) (Mycoplasma pulmonis).